Here is an 89-residue protein sequence, read N- to C-terminus: Small ribosomal subunit protein uS15 (89 aa).

It belongs to the universal ribosomal protein uS15 family. As to quaternary structure, part of the 30S ribosomal subunit. Forms a bridge to the 50S subunit in the 70S ribosome, contacting the 23S rRNA.

One of the primary rRNA binding proteins, it binds directly to 16S rRNA where it helps nucleate assembly of the platform of the 30S subunit by binding and bridging several RNA helices of the 16S rRNA. Its function is as follows. Forms an intersubunit bridge (bridge B4) with the 23S rRNA of the 50S subunit in the ribosome. This is Small ribosomal subunit protein uS15 from Bacteroides thetaiotaomicron (strain ATCC 29148 / DSM 2079 / JCM 5827 / CCUG 10774 / NCTC 10582 / VPI-5482 / E50).